Reading from the N-terminus, the 388-residue chain is Mannosyl-3-phosphoglycerate synthase (388 aa).

It belongs to the glycosyltransferase 2 family.

Its subcellular location is the cytoplasm. It carries out the reaction (2R)-3-phosphoglycerate + GDP-alpha-D-mannose = 2-O-(alpha-D-mannosyl)-3-phosphoglycerate + GDP + H(+). Its pathway is carbohydrate biosynthesis; 2-(alpha-D-mannosyl)-D-glycerate biosynthesis; 2-(alpha-D-mannosyl)-D-glycerate from GDP-alpha-D-mannose (MPG route): step 1/2. Functionally, transfers a mannosyl group from GDP-mannose to phosphoglycerate to form mannosyl-3-phosphoglycerate (MPG). This Aeropyrum pernix (strain ATCC 700893 / DSM 11879 / JCM 9820 / NBRC 100138 / K1) protein is Mannosyl-3-phosphoglycerate synthase (mngA).